Reading from the N-terminus, the 827-residue chain is Probable beta-glucosidase H (827 aa).

Residue Asp223 is part of the active site. The PA14 domain maps to 387–546 (RLLTNAVMHF…DSAEMVRSAV (160 aa)). Asn471, Asn594, Asn600, and Asn625 each carry an N-linked (GlcNAc...) asparagine glycan.

The protein belongs to the glycosyl hydrolase 3 family.

The protein localises to the secreted. It carries out the reaction Hydrolysis of terminal, non-reducing beta-D-glucosyl residues with release of beta-D-glucose.. The protein operates within glycan metabolism; cellulose degradation. Its function is as follows. Beta-glucosidases are one of a number of cellulolytic enzymes involved in the degradation of cellulosic biomass. Catalyzes the last step releasing glucose from the inhibitory cellobiose. This Aspergillus oryzae (strain ATCC 42149 / RIB 40) (Yellow koji mold) protein is Probable beta-glucosidase H (bglH).